The chain runs to 313 residues: Type II methyltransferase M.NlaX (313 aa).

The SAM-dependent MTase C5-type domain maps to phenylalanine 2–valine 308. Residue cysteine 74 is part of the active site.

The protein belongs to the class I-like SAM-binding methyltransferase superfamily. C5-methyltransferase family.

The enzyme catalyses a 2'-deoxycytidine in DNA + S-adenosyl-L-methionine = a 5-methyl-2'-deoxycytidine in DNA + S-adenosyl-L-homocysteine + H(+). A methylase, recognizes the double-stranded sequence 5'-CCNGG-3' and methylates C-2 on both strands. May be the equivalent of dcm in this bacteria, or it may protect the DNA from cleavage by the putative NlaXP endonuclease. This chain is Type II methyltransferase M.NlaX (nlaXM), found in Neisseria lactamica.